The sequence spans 293 residues: Protease HtpX (293 aa).

Transmembrane regions (helical) follow at residues 4–24 (IALFLLTNLAVMVVFGLVLSL) and 34–54 (GLMIMALLFGFGGSFVSLLMS). Residue His139 coordinates Zn(2+). Residue Glu140 is part of the active site. Zn(2+) is bound at residue His143. Helical transmembrane passes span 158-178 (VVNTFVIFISRILAQLAAGFM) and 193-213 (LIYFAVATVLELVFGILASII). Glu222 serves as a coordination point for Zn(2+).

Belongs to the peptidase M48B family. Zn(2+) is required as a cofactor.

The protein localises to the cell inner membrane. This chain is Protease HtpX, found in Escherichia fergusonii (strain ATCC 35469 / DSM 13698 / CCUG 18766 / IAM 14443 / JCM 21226 / LMG 7866 / NBRC 102419 / NCTC 12128 / CDC 0568-73).